The following is a 191-amino-acid chain: Amelogenin, X isoform (191 aa).

Positions 1–16 are cleaved as a signal peptide; it reads MGTWILFACLLGAAFA. At Ser-32 the chain carries Phosphoserine. Residues 95 to 117 show a composition bias toward low complexity; sequence IPQQPMMPVPGQHSMTPIQHHQP. Residues 95 to 191 form a disordered region; the sequence is IPQQPMMPVP…TDKTKREEVD (97 aa). Pro residues predominate over residues 118 to 171; that stretch reads NLPPPAQQPYQPQPVQPQPHQPMQPQPPVHPMQPLPPQPPLPPMFPMQPLPPML.

It belongs to the amelogenin family. Interacts with KRT5. In terms of processing, phosphorylated by FAM20C in vitro.

It localises to the secreted. It is found in the extracellular space. The protein localises to the extracellular matrix. Plays a role in biomineralization. Seems to regulate the formation of crystallites during the secretory stage of tooth enamel development. Thought to play a major role in the structural organization and mineralization of developing enamel. This Homo sapiens (Human) protein is Amelogenin, X isoform (AMELX).